Reading from the N-terminus, the 152-residue chain is Ubiquitin-conjugating enzyme E2 N (152 aa).

In terms of domain architecture, UBC core spans 3 to 149; the sequence is GLPRRIIKET…ARAWTRLYAM (147 aa). Lys-82 bears the N6-acetyllysine mark. The active-site Glycyl thioester intermediate is Cys-87. Lys-92 participates in a covalent cross-link: Glycyl lysine isopeptide (Lys-Gly) (interchain with G-Cter in ISG15).

This sequence belongs to the ubiquitin-conjugating enzyme family. Heterodimer with UBE2V2. Interacts (UBE2V2-UBE2N heterodimer) with the E3 ligase STUB1 (via the U-box domain); the complex has a specific 'Lys-63'-linked polyubiquitination activity. Interacts with RNF8 and RNF168. Interacts with RNF11. Interacts with the E3 ligases, HLTF and SHPRH; the interactions promote the 'Lys-63'-linked polyubiquitination of PCNA upon genotoxic stress and lead to DNA repair. Interacts with ARIH2 (via RING-type 2). Interacts with OTUB1; leading to inhibit E2-conjugating activity. Interacts with GPS2; leading to inhibit E2-conjugating activity. Interacts with RIGI and RNF135; involved in RIGI ubiquitination and activation. Post-translationally, conjugation to ISG15 impairs formation of the thioester bond with ubiquitin but not interaction with UBE2V2.

The enzyme catalyses S-ubiquitinyl-[E1 ubiquitin-activating enzyme]-L-cysteine + [E2 ubiquitin-conjugating enzyme]-L-cysteine = [E1 ubiquitin-activating enzyme]-L-cysteine + S-ubiquitinyl-[E2 ubiquitin-conjugating enzyme]-L-cysteine.. It functions in the pathway protein modification; protein ubiquitination. Its activity is regulated as follows. Activity is inhibited by binding to OTUB1, which prevents 'Lys-63'-linked polyubiquitination. Activity is inhibited by GPS2, leading to prevent 'Lys-63'-linked polyubiquitination. Its function is as follows. The UBE2V1-UBE2N and UBE2V2-UBE2N heterodimers catalyze the synthesis of non-canonical 'Lys-63'-linked polyubiquitin chains. This type of polyubiquitination does not lead to protein degradation by the proteasome. Mediates transcriptional activation of target genes. Plays a role in the control of progress through the cell cycle and differentiation. Plays a role in the error-free DNA repair pathway and contributes to the survival of cells after DNA damage. Acts together with the E3 ligases, HLTF and SHPRH, in the 'Lys-63'-linked poly-ubiquitination of PCNA upon genotoxic stress, which is required for DNA repair. Appears to act together with E3 ligase RNF5 in the 'Lys-63'-linked polyubiquitination of JKAMP thereby regulating JKAMP function by decreasing its association with components of the proteasome and ERAD. Promotes TRIM5 capsid-specific restriction activity and the UBE2V1-UBE2N heterodimer acts in concert with TRIM5 to generate 'Lys-63'-linked polyubiquitin chains which activate the MAP3K7/TAK1 complex which in turn results in the induction and expression of NF-kappa-B and MAPK-responsive inflammatory genes. Together with RNF135 and UB2V1, catalyzes the viral RNA-dependent 'Lys-63'-linked polyubiquitination of RIGI to activate the downstream signaling pathway that leads to interferon beta production. UBE2V1-UBE2N together with TRAF3IP2 E3 ubiquitin ligase mediate 'Lys-63'-linked polyubiquitination of TRAF6, a component of IL17A-mediated signaling pathway. This is Ubiquitin-conjugating enzyme E2 N (UBE2N) from Bos taurus (Bovine).